A 206-amino-acid polypeptide reads, in one-letter code: Shieldin complex subunit 1 (206 aa).

Polar residues-rich tracts occupy residues 1 to 15 (MATQETTPGSQTEES), 33 to 43 (RPSQQTNSEAF), and 60 to 69 (DSSNLNTEQN). 2 disordered regions span residues 1 to 21 (MATQETTPGSQTEESNALDLP) and 33 to 69 (RPSQQTNSEAFSSEEACSIPCSSDVDPDSSNLNTEQN).

As to quaternary structure, component of the shieldin complex, consisting of SHLD1, SHLD2, SHLD3 and MAD2L2/REV7. Within the complex, SHLD2 forms a scaffold which interacts with a SHLD3-MAD2L2 subcomplex via its N-terminus, and with SHLD1 via its C-terminus. Interacts with ASTE1.

The protein resides in the chromosome. Component of the shieldin complex, which plays an important role in repair of DNA double-stranded breaks (DSBs). During G1 and S phase of the cell cycle, the complex functions downstream of TP53BP1 to promote non-homologous end joining (NHEJ) and suppress DNA end resection. Mediates various NHEJ-dependent processes including immunoglobulin class-switch recombination, and fusion of unprotected telomeres. The chain is Shieldin complex subunit 1 from Bos taurus (Bovine).